The following is a 136-amino-acid chain: Probable endoribonuclease MazF7 (136 aa).

Positions 115–136 are disordered; that stretch reads TGPERGEAATHSPVRWTGGRDP.

Belongs to the PemK/MazF family. Forms a complex with cognate antitoxin MazE7.

In terms of biological role, toxic component of a type II toxin-antitoxin (TA) system. Upon expression in E.coli and M.smegmatis inhibits cell growth and colony formation. Its toxic effect is neutralized by coexpression with cognate antitoxin MazE7. Probably an endoribonuclease. The sequence is that of Probable endoribonuclease MazF7 (mazF7) from Mycobacterium tuberculosis (strain ATCC 25618 / H37Rv).